The sequence spans 22 residues: Mu-conotoxin CnIIIA (22 aa).

Cystine bridges form between C3/C15, C4/C21, and C10/C22. The residue at position 22 (C22) is a Cysteine amide.

This sequence belongs to the conotoxin M superfamily. As to expression, expressed by the venom duct. Has not been isolated from the crude venom.

Its subcellular location is the secreted. In terms of biological role, mu-conotoxins block voltage-gated sodium channels (Nav). This synthetic toxin moderately blocks rNav1.1/SCN1A, rNav1.2/SCN2A, rNav1.3/SCN3A, rNav1.4/SCN4A, rNav1.5/SCN5A, and mNav1.6/SCN8A. This block is very slowly reversible. Causes seizures when injected intracranially into mice. This chain is Mu-conotoxin CnIIIA, found in Conus consors (Singed cone).